Here is a 1055-residue protein sequence, read N- to C-terminus: MKSASSEQSVERIENGHKKKRNRPQKQNRRSKQSSVPIEDAHVEESLDGRDSSRSKAKDSTSSSKQQRPNTDELEAMRASNVAFNSMPPMRAESGYPRRSASPLLSSPEVSKQLLSKSCPDPRACEQSPGMNGELFQQIEGSSQRKIFSSHWSLDAVTEALEKGEAFKALFRVNAHNRNEAYCKIDGVPTDILINGNVCQSRAVEGDTVVIKLDPLSLWPKMKGFVTESAAKPEGTNSPPEKDDKKARQKNGIDVVEGFEDGFSKNKSSVIGKGAKNGVTPSSPPSLDSCLGSFCEQKGNCSAVDKLCGILSSFPHKRPTGQVVAVVEKSLVRDSIVGLLDVKGWIHYKESDPKRCKSPLSLSDDEYVQLMPADPRFPKLIVPFHVLPGSIRARLENLDPNLEAELVAAQIVDWGEGSPFPVAQITHLFGRGSELEPQINAILYQNSVCDSDFSPGSLTSLPRVPWEVPEEEVQRRKDLRDLCVLTIDPSTATDLDDALSVQSLPGGFFRVGVHIADVSYFVLPETALDTEARFRSTSVYLMQRKISMLPPLLSENVGSLSPGADRLAFSILWDLNREGDVIDRWIGRTIIRSCCKLSYDHAQDIIDGKSDVAENGWPALHGSFKWCDVTRSVKQLSEISTTLRQKRFRNGALQLENSKPVFLFDEHGVPYDFVTCSRKGSNFLVEEFMLLANMTAAEVISQAYRASSLLRRHPEPNTRKLKEFEGFCSKHGMDLDISSSGQLQDSLEKITGNLKDDSVFVDILNNYAIKPMQLASYFCTGNLKDSVAEWGHYALAVPLYTHFTSPLRRYPDIVVHRALAAALEAEELYSKQKQTAIDEGRSCFTGIHFNKDAAESIEGKEALSVAALKHGVPSTEILSDVAAYCNERKLAARKVRDACDKLYTWFVLKQKEIFPCEARVMNLGSRFMTVYISKLGIERRIYYDQIEGLCADWLEATSTLIVDKLYSKRGGRGFFKPMKEAVYLVSPCEVCVAKCSALSVHDTESPEAVSIDEVAPAVFPLTIQLFSTIPVVLHAVGGDDGPLDIGARLYMSSYY.

Disordered regions lie at residues 1-109 and 229-249; these read MKSA…SSPE and SAAKPEGTNSPPEKDDKKARQ. Basic residues predominate over residues 17-32; it reads HKKKRNRPQKQNRRSK. The segment covering 39–59 has biased composition (basic and acidic residues); that stretch reads EDAHVEESLDGRDSSRSKAKD. Over residues 97 to 108 the composition is skewed to low complexity; it reads PRRSASPLLSSP. Positions 367–446 constitute a CSD2 domain; that stretch reads YVQLMPADPR…PQINAILYQN (80 aa). The RNB domain occupies 476–824; the sequence is RKDLRDLCVL…VHRALAAALE (349 aa). Residues D488 and D497 each contribute to the Mg(2+) site.

This sequence belongs to the RNR ribonuclease family. DIS3L2 subfamily.

It localises to the cytoplasm. Probable inactive 3'-5'-exoribonuclease. Is unable to complement the growth defect of a yeast mutant lacking RRP44 exonuclease. The sequence is that of Inactive exonuclease DIS3L2 from Arabidopsis thaliana (Mouse-ear cress).